The chain runs to 302 residues: Gigasin-6 (302 aa).

The signal sequence occupies residues 1-22 (MSSRNLLYSSVVLFLVLFYCHG). A helical membrane pass occupies residues 75–95 (ITTDTLFGLGGISALFANILI).

In terms of tissue distribution, component of the organic matrix of calcified shell layers.

The protein localises to the membrane. The chain is Gigasin-6 from Magallana gigas (Pacific oyster).